A 682-amino-acid chain; its full sequence is DNA-directed RNA polymerase subunit beta' (682 aa).

Residues cysteine 69, cysteine 71, cysteine 87, and cysteine 90 each coordinate Zn(2+). Mg(2+) is bound by residues aspartate 489, aspartate 491, and aspartate 493.

The protein belongs to the RNA polymerase beta' chain family. RpoC1 subfamily. As to quaternary structure, in plastids the minimal PEP RNA polymerase catalytic core is composed of four subunits: alpha, beta, beta', and beta''. When a (nuclear-encoded) sigma factor is associated with the core the holoenzyme is formed, which can initiate transcription. Mg(2+) is required as a cofactor. It depends on Zn(2+) as a cofactor.

It is found in the plastid. Its subcellular location is the chloroplast. It carries out the reaction RNA(n) + a ribonucleoside 5'-triphosphate = RNA(n+1) + diphosphate. In terms of biological role, DNA-dependent RNA polymerase catalyzes the transcription of DNA into RNA using the four ribonucleoside triphosphates as substrates. This Acorus gramineus (Dwarf sweet flag) protein is DNA-directed RNA polymerase subunit beta'.